Consider the following 30-residue polypeptide: Protamine-YII (30 aa).

The segment at 1–30 is disordered; the sequence is PRRRTRRASRPVRRRRPRRVSRRRRARRRR.

As to expression, testis.

The protein localises to the nucleus. It is found in the chromosome. Protamines substitute for histones in the chromatin of sperm during the haploid phase of spermatogenesis. They compact sperm DNA into a highly condensed, stable and inactive complex. The polypeptide is Protamine-YII (Clupea harengus (Atlantic herring)).